A 318-amino-acid chain; its full sequence is tRNA-cytidine(32) 2-sulfurtransferase (318 aa).

The PP-loop motif motif lies at serine 52 to serine 57. The [4Fe-4S] cluster site is built by cysteine 127, cysteine 130, and cysteine 218.

It belongs to the TtcA family. In terms of assembly, homodimer. It depends on Mg(2+) as a cofactor. Requires [4Fe-4S] cluster as cofactor.

The protein localises to the cytoplasm. The enzyme catalyses cytidine(32) in tRNA + S-sulfanyl-L-cysteinyl-[cysteine desulfurase] + AH2 + ATP = 2-thiocytidine(32) in tRNA + L-cysteinyl-[cysteine desulfurase] + A + AMP + diphosphate + H(+). It participates in tRNA modification. In terms of biological role, catalyzes the ATP-dependent 2-thiolation of cytidine in position 32 of tRNA, to form 2-thiocytidine (s(2)C32). The sulfur atoms are provided by the cysteine/cysteine desulfurase (IscS) system. The protein is tRNA-cytidine(32) 2-sulfurtransferase of Actinobacillus pleuropneumoniae serotype 7 (strain AP76).